Consider the following 404-residue polypeptide: Keratin, type I cuticular Ha3-I (404 aa).

The segment at Met1–Glu56 is head. One can recognise an IF rod domain in the interval Glu56 to Leu367. A coil 1A region spans residues Lys57–Arg91. The tract at residues Asn92 to Ala102 is linker 1. Residues Tyr103–Cys203 are coil 1B. Residues Gln204–Val219 are linker 12. Positions Asp220 to Glu363 are coil 2. Residues Asp364 to Arg404 form a tail region.

This sequence belongs to the intermediate filament family.

This Mus musculus (Mouse) protein is Keratin, type I cuticular Ha3-I.